A 487-amino-acid polypeptide reads, in one-letter code: 2-aminomuconic semialdehyde dehydrogenase (487 aa).

Residue 231–236 (GSQPTA) coordinates NAD(+). Catalysis depends on Glu253, which acts as the Proton acceptor. Cys287 (nucleophile) is an active-site residue.

This sequence belongs to the aldehyde dehydrogenase family.

Its subcellular location is the cytoplasm. It carries out the reaction 2-aminomuconate 6-semialdehyde + NAD(+) + H2O = (2Z,4E)-2-aminomuconate + NADH + 2 H(+). It functions in the pathway amino-acid degradation; L-kynurenine degradation. Catalyzes the NAD-dependent oxidation of 2-aminomuconic semialdehyde of the kynurenine metabolic pathway in L-tryptophan degradation. The polypeptide is 2-aminomuconic semialdehyde dehydrogenase (ALDH8A1) (Bos taurus (Bovine)).